The primary structure comprises 425 residues: Actin-related protein 3 (425 aa).

The protein belongs to the actin family. ARP3 subfamily. In terms of assembly, component of the Arp2/3 complex, at least composed of arx-1, arx-2, arx-4 and arx-6.

The protein localises to the cytoplasm. It is found in the cytoskeleton. Its function is as follows. Functions as ATP-binding component of the Arp2/3 complex which is involved in regulation of actin polymerization and together with an activating nucleation-promoting factor (NPF) mediates the formation of branched actin networks. Seems to contact the pointed end of the daughter actin filament. Plays a role in time-dependent memory loss and the retention of conditioned behavior over time. The protein is Actin-related protein 3 of Caenorhabditis elegans.